Here is a 568-residue protein sequence, read N- to C-terminus: MVLDPKEKMPDDGASGDHGDSASLGAINPAYSNSSLPHSTGDSEEPFTTYFDEKIPIPEEEYSCFSFRKLWAFTGPGFLMSIAYLDPGNIESDLQSGAVAGFKLLWVLLLATIVGLLLQRLAARLGVVTGLHLAEVCHRQYPKVPRIILWLMVELAIIGSDMQEVIGSAIAINLLSAGRVPLWGGVLITIADTFVFLFLDKYGLRKLEAFFGFLITIMALTFGYEYITVKPSQSQVLRGMFVPSCPGCRTPQVEQAVGIVGAVIMPHNMYLHSALVKSRQVNRANKQEVREANKYFFIESCIALFVSFIINVFVVSVFAEAFFEKTNKQVVEVCKNNSSPHADLFPSDNSTLAVDIYKGGVVLGCYFGPAALYIWAVGILAAGQSSTMTGTYSGQFVMEGFLNLKWSRFARVILTRSIAIIPTLLVAVFQDVEHLTGMNDFLNVLQSLQLPFALIPILTFTSLRPVMSEFSNGIGWRIAGGILVLIVCSINMYFVVVYVQELGHVALYVVAAVVSVAYLTFVFYLGWQCLIALGLSFLDCGRSYRLGLTAQPELYLLNTVDADSVVSR.

Positions 1–20 (MVLDPKEKMPDDGASGDHGD) are enriched in basic and acidic residues. Positions 1–45 (MVLDPKEKMPDDGASGDHGDSASLGAINPAYSNSSLPHSTGDSEE) are disordered. At 1–69 (MVLDPKEKMP…EEYSCFSFRK (69 aa)) the chain is on the cytoplasmic side. The segment covering 30 to 40 (AYSNSSLPHST) has biased composition (polar residues). Residues 70 to 90 (LWAFTGPGFLMSIAYLDPGNI) form a helical membrane-spanning segment. Residues 91–95 (ESDLQ) lie on the Extracellular side of the membrane. Residues 96 to 117 (SGAVAGFKLLWVLLLATIVGLL) form a helical membrane-spanning segment. At 118–154 (LQRLAARLGVVTGLHLAEVCHRQYPKVPRIILWLMVE) the chain is on the cytoplasmic side. A helical transmembrane segment spans residues 155-175 (LAIIGSDMQEVIGSAIAINLL). Topologically, residues 176-179 (SAGR) are extracellular. A helical membrane pass occupies residues 180-194 (VPLWGGVLITIADTF). Residues 195–208 (VFLFLDKYGLRKLE) are Cytoplasmic-facing. A helical membrane pass occupies residues 209–229 (AFFGFLITIMALTFGYEYITV). The Extracellular segment spans residues 230-255 (KPSQSQVLRGMFVPSCPGCRTPQVEQ). The chain crosses the membrane as a helical span at residues 256 to 276 (AVGIVGAVIMPHNMYLHSALV). Residues 277–301 (KSRQVNRANKQEVREANKYFFIESC) are Cytoplasmic-facing. A helical membrane pass occupies residues 302-322 (IALFVSFIINVFVVSVFAEAF). Residues 323 to 360 (FEKTNKQVVEVCKNNSSPHADLFPSDNSTLAVDIYKGG) lie on the Extracellular side of the membrane. N-linked (GlcNAc...) asparagine glycans are attached at residues Asn-336 and Asn-349. Residues 361-381 (VVLGCYFGPAALYIWAVGILA) form a helical membrane-spanning segment. Topologically, residues 382–408 (AGQSSTMTGTYSGQFVMEGFLNLKWSR) are cytoplasmic. Residues 409–429 (FARVILTRSIAIIPTLLVAVF) form a helical membrane-spanning segment. At 430-440 (QDVEHLTGMND) the chain is on the extracellular side. A helical transmembrane segment spans residues 441–461 (FLNVLQSLQLPFALIPILTFT). Residues 462-482 (SLRPVMSEFSNGIGWRIAGGI) lie on the Cytoplasmic side of the membrane. A helical membrane pass occupies residues 483–503 (LVLIVCSINMYFVVVYVQELG). The Extracellular portion of the chain corresponds to 504 to 506 (HVA). A helical membrane pass occupies residues 507–527 (LYVVAAVVSVAYLTFVFYLGW). Over 528 to 568 (QCLIALGLSFLDCGRSYRLGLTAQPELYLLNTVDADSVVSR) the chain is Cytoplasmic. Positions 555-559 (YLLNT) are required for early endosome targeting. Residues Leu-556, Ser-564, and Ser-567 each carry the phosphoserine modification.

It belongs to the NRAMP family. Forms a complex with NDFIP1 and NEDD4L, in cortical neurons, in response to iron and cobalt exposure; this interaction leads to SLC11A2 ubiquitination by NEDD4L and proteasome-dependent degradation. Interacts with NDFIP1, NDFIP2 and WWP2; this interaction leads to SLC11A2 ubiquitination by WWP2 and subsequent proteasome-dependent degradation. Interacts with COX2 and TOM6 at the outer mitochondrion membrane. Interacts with ARRDC1; this interaction regulates the incorporation of SLC11A2 into extracellular vesicles through an ubiquitination-dependent mechanism. Interacts with ARRDC4; controls the incorporation of SLC11A2 into extracellular vesicles through an ubiquitination-dependent mechanism. Post-translationally, ubiquitinated by WWP2. N-glycosylated. In terms of tissue distribution, abundantly expressed in erythroid precursor cells (at protein level). As to expression, expressed in duodenum (at protein level).

It localises to the golgi apparatus. The protein localises to the trans-Golgi network membrane. Its subcellular location is the early endosome membrane. The protein resides in the recycling endosome membrane. It is found in the cell membrane. It localises to the late endosome membrane. The protein localises to the lysosome membrane. Its subcellular location is the apical cell membrane. The protein resides in the mitochondrion outer membrane. It is found in the extracellular vesicle membrane. The enzyme catalyses Fe(2+)(in) + H(+)(in) = Fe(2+)(out) + H(+)(out). It catalyses the reaction Co(2+)(out) + H(+)(out) = Co(2+)(in) + H(+)(in). It carries out the reaction Cd(2+)(out) + H(+)(out) = Cd(2+)(in) + H(+)(in). The catalysed reaction is Mn(2+)(in) + H(+)(in) = Mn(2+)(out) + H(+)(out). The enzyme catalyses Zn(2+)(out) + H(+)(out) = Zn(2+)(in) + H(+)(in). It catalyses the reaction Ni(2+)(out) + H(+)(out) = Ni(2+)(in) + H(+)(in). It carries out the reaction H(+)(in) = H(+)(out). The catalysed reaction is Fe(2+)(in) = Fe(2+)(out). In terms of biological role, proton-coupled metal ion symporter operating with a proton to metal ion stoichiometry of 1:1. Selectively transports various divalent metal cations, in decreasing affinity: Cd(2+) &gt; Fe(2+) &gt; Co(2+), Mn(2+) &gt;&gt; Zn(2+), Ni(2+), VO(2+). Essential for maintenance of iron homeostasis by modulating intestinal absorption of dietary Fe(2+) and TF-associated endosomal Fe(2+) transport in erythroid precursors and other cells. Enables Fe(2+) and Mn(2+) ion entry into mitochondria, and is thus expected to promote mitochondrial heme synthesis, iron-sulfur cluster biogenesis and antioxidant defense. Can mediate uncoupled fluxes of either protons or metal ions. The sequence is that of Natural resistance-associated macrophage protein 2 (Slc11a2) from Mus musculus (Mouse).